We begin with the raw amino-acid sequence, 139 residues long: ATP synthase epsilon chain (139 aa).

The protein belongs to the ATPase epsilon chain family. F-type ATPases have 2 components, CF(1) - the catalytic core - and CF(0) - the membrane proton channel. CF(1) has five subunits: alpha(3), beta(3), gamma(1), delta(1), epsilon(1). CF(0) has three main subunits: a, b and c.

It localises to the cell inner membrane. Its function is as follows. Produces ATP from ADP in the presence of a proton gradient across the membrane. The protein is ATP synthase epsilon chain of Enterobacter sp. (strain 638).